We begin with the raw amino-acid sequence, 173 residues long: MKRPEKEAVVAQLTEEFRNADAVYLTEYRGLTVPQISDLREKLGRDTSYTVAKNTLARIAAKEAGIEGLDEILSGPTAITFVKGDFIEAAKVIRDFAKDNKALVIKGAAADGTVYDAEGAKKLADLKSRPQLLAEFAGDIKASMAKAAYLFNALPTKAVRTIDALREKQEKAA.

It belongs to the universal ribosomal protein uL10 family. As to quaternary structure, part of the ribosomal stalk of the 50S ribosomal subunit. The N-terminus interacts with L11 and the large rRNA to form the base of the stalk. The C-terminus forms an elongated spine to which L12 dimers bind in a sequential fashion forming a multimeric L10(L12)X complex.

In terms of biological role, forms part of the ribosomal stalk, playing a central role in the interaction of the ribosome with GTP-bound translation factors. The chain is Large ribosomal subunit protein uL10 from Bifidobacterium longum (strain DJO10A).